Here is a 268-residue protein sequence, read N- to C-terminus: Expansin-B3 (268 aa).

The N-terminal stretch at 1-25 (MAFSISKKAAVAALFSFLVVTCVAG) is a signal peptide. An N-linked (GlcNAc...) asparagine glycan is attached at Asn-30. Residues 62–168 (GGACGFKNTN…KRVPCNFPGL (107 aa)) form the Expansin-like EG45 domain. Intrachain disulfides connect Cys-65/Cys-93, Cys-96/Cys-163, and Cys-101/Cys-107. Positions 181 to 262 (VYFAVLVEYE…NWAPMAVYRS (82 aa)) constitute an Expansin-like CBD domain. Asn-238 carries an N-linked (GlcNAc...) asparagine glycan.

The protein belongs to the expansin family. Expansin B subfamily. In terms of tissue distribution, expressed in roots, coleoptiles and internodes.

Its subcellular location is the secreted. The protein resides in the cell wall. It is found in the membrane. Its function is as follows. May cause loosening and extension of plant cell walls by disrupting non-covalent bonding between cellulose microfibrils and matrix glucans. No enzymatic activity has been found. May be required for rapid internodal elongation in deepwater rice during submergence. The polypeptide is Expansin-B3 (EXPB3) (Oryza sativa subsp. japonica (Rice)).